The chain runs to 185 residues: piRNA-mediated silencing protein C19orf84 homolog (185 aa).

Disordered regions lie at residues 1 to 38 and 93 to 185; these read MDEL…PSLL and HIWP…EADY. Polar residues predominate over residues 11–25; that stretch reads NGDNLSLPSAGTESW. The span at 26-38 shows a compositional bias: low complexity; sequence PTSATPGLPPSLL. A compositionally biased stretch (basic residues) spans 118-130; the sequence is RPSRGWGRGRGRG. The segment covering 139 to 150 has biased composition (basic and acidic residues); it reads GPERAEERERNM.

As to quaternary structure, interacts with SPOCD1.

It is found in the nucleus. It localises to the nucleoplasm. Its function is as follows. Protein adapter involved in piRNA-directed transposon methylation by connecting PIWIL4-piRNA and DNA methylation machineries. The PIWIL4-piRNA pathway plays a central role during spermatogenesis by directing transposon DNA methylation and silencing, thereby preventing their mobilization, which is essential for the germline integrity. In Mus musculus (Mouse), this protein is piRNA-mediated silencing protein C19orf84 homolog.